Here is a 588-residue protein sequence, read N- to C-terminus: Arginine--tRNA ligase (588 aa).

Positions 129–139 match the 'HIGH' region motif; sequence PNIAKEMHVGH.

It belongs to the class-I aminoacyl-tRNA synthetase family. As to quaternary structure, monomer.

It is found in the cytoplasm. It catalyses the reaction tRNA(Arg) + L-arginine + ATP = L-arginyl-tRNA(Arg) + AMP + diphosphate. The polypeptide is Arginine--tRNA ligase (Frankia casuarinae (strain DSM 45818 / CECT 9043 / HFP020203 / CcI3)).